We begin with the raw amino-acid sequence, 264 residues long: Thymidylate synthase (264 aa).

R21 contacts dUMP. H51 serves as a coordination point for (6R)-5,10-methylene-5,6,7,8-tetrahydrofolate. DUMP is bound at residue 126 to 127 (RR). The active-site Nucleophile is C146. DUMP is bound by residues 166–169 (RSCD), N177, and 207–209 (HLY). Position 169 (D169) interacts with (6R)-5,10-methylene-5,6,7,8-tetrahydrofolate. (6R)-5,10-methylene-5,6,7,8-tetrahydrofolate is bound at residue A263.

It belongs to the thymidylate synthase family. Bacterial-type ThyA subfamily. In terms of assembly, homodimer.

It localises to the cytoplasm. The catalysed reaction is dUMP + (6R)-5,10-methylene-5,6,7,8-tetrahydrofolate = 7,8-dihydrofolate + dTMP. Its pathway is pyrimidine metabolism; dTTP biosynthesis. Functionally, catalyzes the reductive methylation of 2'-deoxyuridine-5'-monophosphate (dUMP) to 2'-deoxythymidine-5'-monophosphate (dTMP) while utilizing 5,10-methylenetetrahydrofolate (mTHF) as the methyl donor and reductant in the reaction, yielding dihydrofolate (DHF) as a by-product. This enzymatic reaction provides an intracellular de novo source of dTMP, an essential precursor for DNA biosynthesis. This chain is Thymidylate synthase, found in Escherichia coli (strain 55989 / EAEC).